A 158-amino-acid polypeptide reads, in one-letter code: uncharacterized protein (158 aa).

It localises to the mitochondrion. This is an uncharacterized protein from Arabidopsis thaliana (Mouse-ear cress).